We begin with the raw amino-acid sequence, 230 residues long: Agamous-like MADS-box protein AGL11 (230 aa).

One can recognise an MADS-box domain in the interval R3 to Y57. The region spanning A87–Y177 is the K-box domain. Residues S211–G230 are disordered. Basic and acidic residues predominate over residues D221 to G230.

In terms of assembly, interacts with AGL15 and AGL16.

It is found in the nucleus. Functionally, probable transcription factor. Is required, together with TT16/AGL32 for the maternal control of endothelium formation, which is essential for female gametophyte development and fertilization, and seed formation. The chain is Agamous-like MADS-box protein AGL11 (AGL11) from Arabidopsis thaliana (Mouse-ear cress).